The primary structure comprises 1437 residues: Myomesin-3 (1437 aa).

The interval 1–49 is disordered; the sequence is MTLPHSLGGAGDPRPPQAMEVHRLEHRQEEEQKEERQHSLRMGSSVRRR. Over residues 20 to 38 the composition is skewed to basic and acidic residues; it reads EVHRLEHRQEEEQKEERQH. The stretch at 120–149 forms a coiled coil; sequence RLLRQRRDWKTLRRRTEEKVQEAKELRELC. Ig-like C2-type domains lie at 154 to 246 and 269 to 361; these read PWFW…AKVL and PSVE…TYVL. Fibronectin type-III domains follow at residues 375–469, 503–598, 604–696, 702–797, and 804–899; these read SPLN…VMGD, PPTN…LRGP, PPAQ…VKQA, APYG…CKEW, and PPYD…LEDK. Ig-like C2-type domains are found at residues 1120 to 1205 and 1334 to 1423; these read PYFE…LDLT and AKVV…VTIS.

Homodimer.

The protein localises to the cytoplasm. It is found in the myofibril. Its subcellular location is the sarcomere. It localises to the m line. Functionally, may link the intermediate filament cytoskeleton to the M-disk of the myofibrils in striated muscle. The protein is Myomesin-3 (MYOM3) of Homo sapiens (Human).